The following is a 372-amino-acid chain: SAM domain-containing protein SAMSN-1 (372 aa).

The segment at 1-71 is disordered; sequence MLKRKPSNAS…SGGSLGKKVR (71 aa). An Important for interaction with 14-3-3 proteins motif is present at residues 20-25; it reads RSSSFG. Phosphoserine is present on residues serine 23 and serine 34. The segment covering 37–49 has biased composition (basic and acidic residues); the sequence is KSDDSIEVHDREL. Residues 52 to 63 are compositionally biased toward low complexity; that stretch reads GSEEQSKTSSSG. Serine 74 is subject to Phosphoserine. A Phosphothreonine modification is found at threonine 76. Serine 90, serine 97, and serine 119 each carry phosphoserine. The disordered stretch occupies residues 90 to 111; sequence SEEKEEESGEEALPYRNSDPMI. Residues 129-146 are compositionally biased toward low complexity; the sequence is LYSGQSSSSGITSCSDGT. The tract at residues 129-153 is disordered; the sequence is LYSGQSSSSGITSCSDGTSNRDSFR. Tyrosine 160 bears the Phosphotyrosine mark. An SH3 domain is found at 163–224; that stretch reads PFCGRAKVHT…KFIYVDVILE (62 aa). The 65-residue stretch at 241-305 folds into the SAM domain; that stretch reads ENHQTIQEFL…LSAAESLLDE (65 aa). Residues 304-372 form a disordered region; that stretch reads DEETTVEHEK…QKIAITESSD (69 aa). Residues 317–329 show a composition bias toward polar residues; it reads PLSSNPDILSASQ.

Interacts with FASLG. Interacts with phosphotyrosine containing proteins. Interacts (via SH3 domain) with CTTN. Interacts (phosphorylated at Ser-23) with YWHAB, YWHAE, YWHAG, YWHAH, YWHAZ and SFN. Interacts directly with SAP30 and HDAC1. Identified in a complex with SAP30 and HDAC1. In terms of tissue distribution, detected in spleen and lymph node (at protein level).

The protein resides in the nucleus. It localises to the cytoplasm. The protein localises to the cell projection. It is found in the ruffle. Its function is as follows. Negative regulator of B-cell activation. Down-regulates cell proliferation (in vitro). Promotes RAC1-dependent membrane ruffle formation and reorganization of the actin cytoskeleton. Regulates cell spreading and cell polarization. Stimulates HDAC1 activity. Regulates LYN activity by modulating its tyrosine phosphorylation. The polypeptide is SAM domain-containing protein SAMSN-1 (Samsn1) (Mus musculus (Mouse)).